A 266-amino-acid polypeptide reads, in one-letter code: Hydroxyethylthiazole kinase (266 aa).

Substrate is bound at residue M46. Residues K122 and T166 each coordinate ATP. G193 lines the substrate pocket.

It belongs to the Thz kinase family. Mg(2+) serves as cofactor.

The catalysed reaction is 5-(2-hydroxyethyl)-4-methylthiazole + ATP = 4-methyl-5-(2-phosphooxyethyl)-thiazole + ADP + H(+). The protein operates within cofactor biosynthesis; thiamine diphosphate biosynthesis; 4-methyl-5-(2-phosphoethyl)-thiazole from 5-(2-hydroxyethyl)-4-methylthiazole: step 1/1. In terms of biological role, catalyzes the phosphorylation of the hydroxyl group of 4-methyl-5-beta-hydroxyethylthiazole (THZ). The chain is Hydroxyethylthiazole kinase from Caldivirga maquilingensis (strain ATCC 700844 / DSM 13496 / JCM 10307 / IC-167).